A 195-amino-acid polypeptide reads, in one-letter code: Dephospho-CoA kinase (195 aa).

Positions 2 to 195 constitute a DPCK domain; it reads IIGLTGGIGV…DIVDSLSLSS (194 aa). Position 10–15 (10–15) interacts with ATP; sequence GVGKSF.

It belongs to the CoaE family.

The protein localises to the cytoplasm. The catalysed reaction is 3'-dephospho-CoA + ATP = ADP + CoA + H(+). It participates in cofactor biosynthesis; coenzyme A biosynthesis; CoA from (R)-pantothenate: step 5/5. In terms of biological role, catalyzes the phosphorylation of the 3'-hydroxyl group of dephosphocoenzyme A to form coenzyme A. This is Dephospho-CoA kinase from Wolbachia sp. subsp. Brugia malayi (strain TRS).